Here is a 296-residue protein sequence, read N- to C-terminus: MAAATADDEGSAATILKQAIAGDRSLVEAAEAISQQTLLRLACEVRQVGDRQPRFTATSIARVDVAPGCRLRFVLDGSPEDAYVTSEDYFKRCCGQSSYRGFAVAVLTANEDHVHSLAVPPLVLLHRFSLFNPRDLLDFELACLLMYLENCPRSHATPSTFAKVLAWLGVAGRRTSPFERVRCLFLRSCHWVLNTLMFMVYVKPFDDEFVLPHWYMARYLLANNPPPVLSALFCATPTSSSFRLPGPPPRSDCVAYNPAGIMGSCWASEEVRAPLVYWWLSETPKRQTSSLFYQFC.

This sequence belongs to the herpesviridae cytoplasmic envelopment protein 1 family. As to quaternary structure, interacts with UL51; this interaction allows incorporation of UL7 within the virion.

The protein localises to the virion. It is found in the virion tegument. The protein resides in the host cytoplasm. It localises to the host Golgi apparatus. In terms of biological role, plays a critical role in cytoplasmic virus egress. Participates in the final step of tegumentation and envelope acquisition within the host cytoplasm. This is Cytoplasmic envelopment protein 1 (UL7) from Human herpesvirus 1 (strain 17) (HHV-1).